Here is a 500-residue protein sequence, read N- to C-terminus: tRNA modification GTPase MnmE (500 aa).

Positions 24, 120, and 159 each coordinate (6S)-5-formyl-5,6,7,8-tetrahydrofolate. Positions 256 to 420 constitute a TrmE-type G domain; it reads GIPVAIIGET…LEKKLVQAAA (165 aa). Asn-266 is a binding site for K(+). Residues 266-271, 285-291, and 310-313 contribute to the GTP site; these read NAGKST, SDIHGTT, and DTAG. Ser-270 lines the Mg(2+) pocket. 3 residues coordinate K(+): Ser-285, Ile-287, and Thr-290. Position 291 (Thr-291) interacts with Mg(2+). Lys-500 contacts (6S)-5-formyl-5,6,7,8-tetrahydrofolate.

The protein belongs to the TRAFAC class TrmE-Era-EngA-EngB-Septin-like GTPase superfamily. TrmE GTPase family. As to quaternary structure, homodimer. Heterotetramer of two MnmE and two MnmG subunits. It depends on K(+) as a cofactor.

It is found in the cytoplasm. Exhibits a very high intrinsic GTPase hydrolysis rate. Involved in the addition of a carboxymethylaminomethyl (cmnm) group at the wobble position (U34) of certain tRNAs, forming tRNA-cmnm(5)s(2)U34. This Phocaeicola vulgatus (strain ATCC 8482 / DSM 1447 / JCM 5826 / CCUG 4940 / NBRC 14291 / NCTC 11154) (Bacteroides vulgatus) protein is tRNA modification GTPase MnmE.